Consider the following 968-residue polypeptide: Alanine--tRNA ligase, cytoplasmic (968 aa).

ATP contacts are provided by residues R77, H95, W176, and 214–216 (IWN). N216 and D239 together coordinate L-alanine. Residue G243 coordinates ATP. The Zn(2+) site is built by H606, H610, C724, and H728.

It belongs to the class-II aminoacyl-tRNA synthetase family. As to quaternary structure, monomer. Zn(2+) serves as cofactor.

The protein resides in the cytoplasm. The catalysed reaction is tRNA(Ala) + L-alanine + ATP = L-alanyl-tRNA(Ala) + AMP + diphosphate. Catalyzes the attachment of alanine to tRNA(Ala) in a two-step reaction: alanine is first activated by ATP to form Ala-AMP and then transferred to the acceptor end of tRNA(Ala). Also edits incorrectly charged tRNA(Ala) via its editing domain. The protein is Alanine--tRNA ligase, cytoplasmic of Caenorhabditis elegans.